A 312-amino-acid polypeptide reads, in one-letter code: CD-NTase-associated protein 12 (312 aa).

A TIR domain is found at 5–127 (RLFIGSSSEE…FNGLTLARFD (123 aa)).

The protein in the C-terminal section; belongs to the bacterial STING family. In terms of assembly, forms homodimers; in the presence of c-di-GMP forms filaments with an ordered array of parallel-stacked subunits.

It catalyses the reaction NAD(+) + H2O = ADP-D-ribose + nicotinamide + H(+). With respect to regulation, NAD(+) hydrolase activity is strongly stimulated by c-di-GMP, weakly by 3'3'-cGAMP, very weakly by c-di-AMP but not at all by 2'3'-cGAMP. Self-association of TIR domains is required for NADase activity. In terms of biological role, effector protein of a CBASS antiviral system with NAD(+) hydrolase activity. CBASS (cyclic oligonucleotide-based antiphage signaling system) provides immunity against bacteriophage. The CD-NTase protein synthesizes cyclic nucleotides in response to infection; these serve as specific second messenger signals. The signals activate a diverse range of effectors, leading to bacterial cell death and thus abortive phage infection. A type I-D CBASS(GG) system. Binds c-di-GMP, does not bind cUMP-AMP. Upon activation by c-di-GMP forms filaments which hydrolyze NAD(+); filament formation is required for enzyme activation. The protein is CD-NTase-associated protein 12 of Niabella drilacis (strain DSM 25811 / CCM 8410 / CCUG 62505 / LMG 26954 / E90).